We begin with the raw amino-acid sequence, 303 residues long: Cysteine synthase B (303 aa).

An N6-(pyridoxal phosphate)lysine modification is found at K41. Pyridoxal 5'-phosphate is bound by residues N71, 174–178 (GTTGT), and S255.

It belongs to the cysteine synthase/cystathionine beta-synthase family. As to quaternary structure, homodimer. Pyridoxal 5'-phosphate is required as a cofactor.

It carries out the reaction O-acetyl-L-serine + hydrogen sulfide = L-cysteine + acetate. It participates in amino-acid biosynthesis; L-cysteine biosynthesis; L-cysteine from L-serine: step 2/2. Functionally, two cysteine synthase enzymes are found. Both catalyze the same reaction. Cysteine synthase B can also use thiosulfate in place of sulfide to give cysteine thiosulfonate as a product. The protein is Cysteine synthase B (cysM) of Escherichia coli (strain K12).